Reading from the N-terminus, the 135-residue chain is Large ribosomal subunit protein uL18 (135 aa).

The interval 1–23 (MSQTANQKAKRIPLGKDASTKRR) is disordered.

The protein belongs to the universal ribosomal protein uL18 family. Part of the 50S ribosomal subunit; part of the 5S rRNA/L5/L18/L25 subcomplex. Contacts the 5S and 23S rRNAs.

Functionally, this is one of the proteins that bind and probably mediate the attachment of the 5S RNA into the large ribosomal subunit, where it forms part of the central protuberance. The chain is Large ribosomal subunit protein uL18 from Rhodococcus jostii (strain RHA1).